The following is a 399-amino-acid chain: Immunoglobulin heavy constant gamma 1 (399 aa).

The tract at residues 1-21 (ASTKGPSVFPLAPSSKSTSGG) is disordered. The CH1 stretch occupies residues 1–98 (ASTKGPSVFP…PSNTKVDKKV (98 aa)). At 1-350 (ASTKGPSVFP…DGELDGLWTT (350 aa)) the chain is on the extracellular side. 3 Ig-like domains span residues 6–99 (PSVF…KKVE), 121–220 (PSVF…KTIS), and 229–325 (PQVY…KSLS). The cysteines at positions 27 and 83 are disulfide-linked. Residues 99–110 (EPKSCDKTHTCP) are hinge. Residues 111–223 (PCPAPELLGG…PIEKTISKAK (113 aa)) form a CH2 region. Intrachain disulfides connect Cys144-Cys204 and Cys250-Cys308. The N-linked (GlcNAc...) (complex) asparagine glycan is linked to Asn180. The segment at 224–330 (GQPREPQVYT…QKSLSLSPEL (107 aa)) is CH3. A helical transmembrane segment spans residues 351 to 371 (ITIFITLFLLSVCYSATVTFF). The Cytoplasmic segment spans residues 372–399 (KVKWIFSSVVDLKQTIIPDYRNMIGQGA).

In terms of assembly, immunoglobulins are composed of two identical heavy chains and two identical light chains; disulfide-linked. Interacts with FCGR1A; this interaction mediates IgG effector functions on monocytes. Interacts with FCGR2A and FCGR3A. In terms of processing, glycosylation on Asn-180 is required for interaction with Fc receptors and ability to activate the complement pathway. (Microbial infection) Deglycosylation on Asn-180 by S.pyogenes EndoS or Endos2 endoglucosidases prevents interaction between immunoglobulin-gamma (IgG) and Fc receptors, impairing ability to activate the complement pathway.

It is found in the secreted. Its subcellular location is the cell membrane. Its function is as follows. Constant region of immunoglobulin heavy chains. Immunoglobulins, also known as antibodies, are membrane-bound or secreted glycoproteins produced by B lymphocytes. In the recognition phase of humoral immunity, the membrane-bound immunoglobulins serve as receptors which, upon binding of a specific antigen, trigger the clonal expansion and differentiation of B lymphocytes into immunoglobulins-secreting plasma cells. Secreted immunoglobulins mediate the effector phase of humoral immunity, which results in the elimination of bound antigens. The antigen binding site is formed by the variable domain of one heavy chain, together with that of its associated light chain. Thus, each immunoglobulin has two antigen binding sites with remarkable affinity for a particular antigen. The variable domains are assembled by a process called V-(D)-J rearrangement and can then be subjected to somatic hypermutations which, after exposure to antigen and selection, allow affinity maturation for a particular antigen. Mediates IgG effector functions on monocytes triggering ADCC of virus-infected cells. In Homo sapiens (Human), this protein is Immunoglobulin heavy constant gamma 1.